Reading from the N-terminus, the 120-residue chain is Large ribosomal subunit protein uL22 (120 aa).

The protein belongs to the universal ribosomal protein uL22 family. Part of the 50S ribosomal subunit.

In terms of biological role, this protein binds specifically to 23S rRNA; its binding is stimulated by other ribosomal proteins, e.g. L4, L17, and L20. It is important during the early stages of 50S assembly. It makes multiple contacts with different domains of the 23S rRNA in the assembled 50S subunit and ribosome. The globular domain of the protein is located near the polypeptide exit tunnel on the outside of the subunit, while an extended beta-hairpin is found that lines the wall of the exit tunnel in the center of the 70S ribosome. This chain is Large ribosomal subunit protein uL22, found in Corynebacterium aurimucosum (strain ATCC 700975 / DSM 44827 / CIP 107346 / CN-1) (Corynebacterium nigricans).